The primary structure comprises 101 residues: Small ribosomal subunit protein bS18c (101 aa).

Residues 1-19 (MDKSKRLFRKSKRSFRRRL) are compositionally biased toward basic residues. The tract at residues 1–23 (MDKSKRLFRKSKRSFRRRLPPIG) is disordered.

This sequence belongs to the bacterial ribosomal protein bS18 family. As to quaternary structure, part of the 30S ribosomal subunit.

It is found in the plastid. The protein resides in the chloroplast. In Liriodendron tulipifera (Tuliptree), this protein is Small ribosomal subunit protein bS18c.